Here is a 388-residue protein sequence, read N- to C-terminus: Glycoprotein-N-acetylgalactosamine 3-beta-galactosyltransferase 1 (388 aa).

The Cytoplasmic portion of the chain corresponds to Met-1–Ser-12. Residues Leu-13–Val-30 form a helical; Signal-anchor for type II membrane protein membrane-spanning segment. Residues Lys-31–Ser-388 are Lumenal-facing. Positions Ser-43 to Ser-65 are disordered. A glycan (N-linked (GlcNAc...) asparagine) is linked at Asn-80. A disulfide bridge links Cys-95 with Cys-119. Residues Met-98, Asn-100, Glu-142, Gly-143, Arg-144, Lys-150, and Asp-173 each coordinate UDP. Asp-173 and Asp-175 together coordinate Mn(2+). Cys-238 and Cys-253 are disulfide-bonded. Trp-292 serves as a coordination point for a glycoprotein. A disulfide bridge connects residues Cys-307 and Cys-308. Residues His-316 and Tyr-317 each coordinate UDP. His-316 serves as a coordination point for Mn(2+). A disordered region spans residues Ser-344–Ser-388. Basic and acidic residues predominate over residues Glu-347–Glu-368. Asn-376 carries N-linked (GlcNAc...) asparagine glycosylation.

The protein belongs to the glycosyltransferase 31 family. Beta3-Gal-T subfamily. In terms of assembly, homodimer; disulfide-linked. The cofactor is Mn(2+).

The protein localises to the membrane. The enzyme catalyses an N-acetyl-alpha-D-galactosaminyl derivative + UDP-alpha-D-galactose = a beta-D-galactosyl-(1-&gt;3)-N-acetyl-alpha-D-galactosaminyl derivative + UDP + H(+). It functions in the pathway protein modification; protein glycosylation. In terms of biological role, glycosyltransferase that generates the core 1 O-glycan Gal-beta1-3GalNAc-alpha1-Ser/Thr (T antigen), which is a precursor for many extended O-glycans in glycoproteins. The sequence is that of Glycoprotein-N-acetylgalactosamine 3-beta-galactosyltransferase 1 from Biomphalaria glabrata (Bloodfluke planorb).